We begin with the raw amino-acid sequence, 70 residues long: Ubiquinol-cytochrome c reductase complex assembly factor 5 (70 aa).

Residues 1-19 (MFTRAQVRRILQRVPGKQR) lie on the Mitochondrial matrix side of the membrane. Residues 20-41 (FGIYRFLPFFFVLGGTMEWIMI) form a helical membrane-spanning segment. The Mitochondrial intermembrane portion of the chain corresponds to 42–70 (KVRVGQETFYDVYRRKASERQYQRRLEDE).

This sequence belongs to the UQCC5 family. Associates with the mitochondrial ribosome. Interacts with UQCC6. Interacts with MT-CYB; interacts with newly synthesizes MT-CYB. Forms a complex, named COMB/coordinator of mitochondrial CYTB biogenesis, composed of UQCC1, UQCC2, UQCC4, UQCC5 and UQCC6; regulates MT-CYB synthesis and promotes its membrane insertion.

It is found in the mitochondrion inner membrane. Its function is as follows. Required for the assembly and stability of the mitochondrial ubiquinol-cytochrome c reductase complex (complex III (CIII) or cytochrome b-c1 complex), a multisubunit transmembrane complex that is part of the mitochondrial electron transport chain (ETC) which drives oxidative phosphorylation. Mediates early complex III biogenesis. Participates in regulating the levels of electron transport chain proteins, and therefore energy supply, in response to changes in energy demand. Also involved in the first steps of cytochrome c oxidase complex (complex IV) assembly. This is Ubiquinol-cytochrome c reductase complex assembly factor 5 from Homo sapiens (Human).